The chain runs to 208 residues: Protein-L-isoaspartate O-methyltransferase (208 aa).

S59 is an active-site residue.

The protein belongs to the methyltransferase superfamily. L-isoaspartyl/D-aspartyl protein methyltransferase family.

Its subcellular location is the cytoplasm. It carries out the reaction [protein]-L-isoaspartate + S-adenosyl-L-methionine = [protein]-L-isoaspartate alpha-methyl ester + S-adenosyl-L-homocysteine. Functionally, catalyzes the methyl esterification of L-isoaspartyl residues in peptides and proteins that result from spontaneous decomposition of normal L-aspartyl and L-asparaginyl residues. It plays a role in the repair and/or degradation of damaged proteins. This is Protein-L-isoaspartate O-methyltransferase from Sodalis glossinidius (strain morsitans).